The chain runs to 164 residues: Magnesium-dependent phosphatase 1 (164 aa).

Aspartate 11 serves as the catalytic Nucleophile. Aspartate 11 is a binding site for Mg(2+). Positions 12 and 13 each coordinate phosphate. Residue aspartate 13 participates in Mg(2+) binding. Aspartate 13 acts as the Proton donor in catalysis. Substrate is bound at residue tryptophan 20. Residues serine 69, arginine 70, and lysine 100 each coordinate phosphate. Substrate is bound at residue arginine 70. A Mg(2+)-binding site is contributed by aspartate 123.

This sequence belongs to the HAD-like hydrolase superfamily. The cofactor is Mg(2+).

It catalyses the reaction O-phospho-L-tyrosyl-[protein] + H2O = L-tyrosyl-[protein] + phosphate. With respect to regulation, inhibited by vanadate and zinc, and slightly by calcium. Functionally, magnesium-dependent phosphatase which may act as a tyrosine phosphatase. The sequence is that of Magnesium-dependent phosphatase 1 (Mdp1) from Mus musculus (Mouse).